Reading from the N-terminus, the 242-residue chain is Type III pantothenate kinase (242 aa).

6 to 13 (DAGNTRIK) lines the ATP pocket. Substrate contacts are provided by residues Y90 and 97–100 (GADR). D99 serves as the catalytic Proton acceptor. T122 contacts ATP. A substrate-binding site is contributed by T172.

This sequence belongs to the type III pantothenate kinase family. As to quaternary structure, homodimer. The cofactor is NH4(+). K(+) serves as cofactor.

The protein localises to the cytoplasm. It carries out the reaction (R)-pantothenate + ATP = (R)-4'-phosphopantothenate + ADP + H(+). It participates in cofactor biosynthesis; coenzyme A biosynthesis; CoA from (R)-pantothenate: step 1/5. Catalyzes the phosphorylation of pantothenate (Pan), the first step in CoA biosynthesis. The protein is Type III pantothenate kinase of Aromatoleum aromaticum (strain DSM 19018 / LMG 30748 / EbN1) (Azoarcus sp. (strain EbN1)).